Here is a 147-residue protein sequence, read N- to C-terminus: Antiholin-like protein LrgA (147 aa).

4 helical membrane-spanning segments follow: residues 12–32 (PAHFFHQVIVIALVLFVSKII), 35–55 (FMPIPMPGSVIGLVLLFVLLC), 74–94 (NIGLLFVPAGISVVNSLGVIS), and 98–118 (FLIIGLIIVSTILLLICTGYV).

This sequence belongs to the CidA/LrgA family. LrgA subfamily.

Its subcellular location is the cell membrane. In terms of biological role, inhibits the expression or activity of extracellular murein hydrolases by interacting, possibly with LrgB, with the holin-like proteins CidA and/or CidB. The LrgAB and CidAB proteins may affect the proton motive force of the membrane. May be involved in programmed cell death (PCD), possibly triggering PCD in response to antibiotics and environmental stresses. This chain is Antiholin-like protein LrgA, found in Staphylococcus aureus (strain MSSA476).